A 561-amino-acid chain; its full sequence is Putative transport protein CKO_02260 (561 aa).

The next 5 membrane-spanning stretches (helical) occupy residues 8-28 (LLNG…LCLG), 32-52 (LGSV…LLGQ), 66-86 (FMLF…SIFF), 94-114 (MLAL…GKLF), and 158-178 (NLSL…IVGA). RCK C-terminal domains follow at residues 200 to 288 (RGLD…SFRN) and 292 to 373 (VFDR…RIGF). The next 5 membrane-spanning stretches (helical) occupy residues 383-403 (LLAF…TFQF), 406-426 (FSFG…LGFL), 447-467 (FGLM…IGNG), 475-495 (MLIA…LFGA), and 540-560 (AIAN…WPGL).

This sequence belongs to the AAE transporter (TC 2.A.81) family. YbjL subfamily.

The protein localises to the cell membrane. In Citrobacter koseri (strain ATCC BAA-895 / CDC 4225-83 / SGSC4696), this protein is Putative transport protein CKO_02260.